A 480-amino-acid chain; its full sequence is Ribosomal protein uS12 methylthiotransferase RimO (480 aa).

The 122-residue stretch at 14–135 (LSVAMVTLGC…IAARLRSIVA (122 aa)) folds into the MTTase N-terminal domain. [4Fe-4S] cluster-binding residues include Cys-23, Cys-59, Cys-98, Cys-193, Cys-197, and Cys-200. In terms of domain architecture, Radical SAM core spans 179-410 (LDDGPTAALK…DLVEELTSQR (232 aa)). One can recognise a TRAM domain in the interval 412–480 (AERLGEQVEV…EGADLDARPL (69 aa)).

Belongs to the methylthiotransferase family. RimO subfamily. It depends on [4Fe-4S] cluster as a cofactor.

It is found in the cytoplasm. The catalysed reaction is L-aspartate(89)-[ribosomal protein uS12]-hydrogen + (sulfur carrier)-SH + AH2 + 2 S-adenosyl-L-methionine = 3-methylsulfanyl-L-aspartate(89)-[ribosomal protein uS12]-hydrogen + (sulfur carrier)-H + 5'-deoxyadenosine + L-methionine + A + S-adenosyl-L-homocysteine + 2 H(+). Functionally, catalyzes the methylthiolation of an aspartic acid residue of ribosomal protein uS12. The chain is Ribosomal protein uS12 methylthiotransferase RimO from Nocardioides sp. (strain ATCC BAA-499 / JS614).